The sequence spans 135 residues: Small ribosomal subunit protein uS12 (135 aa).

The residue at position 89 (Asp89) is a 3-methylthioaspartic acid. Residues 101-135 (SLDTSGVADRKQSRSKYGAKQPKAGAAAPVKGKRR) are disordered. Low complexity predominate over residues 116 to 135 (KYGAKQPKAGAAAPVKGKRR).

Belongs to the universal ribosomal protein uS12 family. As to quaternary structure, part of the 30S ribosomal subunit. Contacts proteins S8 and S17. May interact with IF1 in the 30S initiation complex.

With S4 and S5 plays an important role in translational accuracy. Functionally, interacts with and stabilizes bases of the 16S rRNA that are involved in tRNA selection in the A site and with the mRNA backbone. Located at the interface of the 30S and 50S subunits, it traverses the body of the 30S subunit contacting proteins on the other side and probably holding the rRNA structure together. The combined cluster of proteins S8, S12 and S17 appears to hold together the shoulder and platform of the 30S subunit. The protein is Small ribosomal subunit protein uS12 of Chlorobium phaeobacteroides (strain DSM 266 / SMG 266 / 2430).